A 171-amino-acid polypeptide reads, in one-letter code: Calcium-binding allergen Ole e 8 (171 aa).

4 consecutive EF-hand domains span residues 16–51 (QEPN…LGSN), 52–87 (TSKE…ETDP), 92–127 (GGEN…LGER), and 128–163 (YAEH…KSGN). The Ca(2+) site is built by Asp-29, Asn-31, Asp-33, Lys-35, Glu-40, Asp-65, Asp-67, Asp-69, Glu-76, Asp-105, Asp-107, Asn-109, Glu-116, Asp-141, Asp-143, Asp-145, Tyr-147, and Glu-152.

In terms of assembly, homodimer. In terms of tissue distribution, expressed in pollen.

The polypeptide is Calcium-binding allergen Ole e 8 (Olea europaea (Common olive)).